We begin with the raw amino-acid sequence, 561 residues long: Melanopsin-A (561 aa).

Topologically, residues 1–34 (MRPSTDTMEADTAATHRNFITKVDVPDHAHYTVA) are extracellular. Residues 35–55 (FFVSVIGTLGVTGNALVQFAF) traverse the membrane as a helical segment. Residues 56–68 (YSNKKLRNLPNYF) are Cytoplasmic-facing. Residues 69–89 (IMNQAASDFLMAFTQSPFFFI) form a helical membrane-spanning segment. Over 90–104 (NCLNREWIFGELGCK) the chain is Extracellular. An intrachain disulfide couples C103 to C181. A helical membrane pass occupies residues 105-125 (LYAFLGALFGITSMINLLAIS). Residues 126 to 148 (LDRYMVITRPLEAMKWNSKRRTT) lie on the Cytoplasmic side of the membrane. The chain crosses the membrane as a helical span at residues 149-169 (IAILLVWLYSLAWSLAPLVGW). Residues 170-201 (SSYIPEGLRTSCTWDYVTYTASNRSYTMMLCC) are Extracellular-facing. An N-linked (GlcNAc...) asparagine glycan is attached at N192. A helical membrane pass occupies residues 202–222 (FVFFIPLAIISYCYLFMFLAI). The Cytoplasmic segment spans residues 223-255 (RKTSRDVERLGIQVRKSTIIRQKSIRTEWKLAK). Residues 256–276 (IAFVVIVVYVLSWSPYACVTM) traverse the membrane as a helical segment. Residues 277-291 (ISWSGHANILSPYSK) lie on the Extracellular side of the membrane. A helical membrane pass occupies residues 292-312 (TVPAVIAKASTIYNPFIYAII). K299 is modified (N6-(retinylidene)lysine). Topologically, residues 313 to 561 (HQKYRKTLAD…EDSLEDNDVV (249 aa)) are cytoplasmic. Disordered regions lie at residues 359 to 385 (AIRRQSTAASRHASASKTAAGASSYSS), 404 to 448 (ASFR…SATH), 479 to 503 (NGLSDAGKKTTVANGTPGNHKSKSA), and 539 to 561 (SFTDDGSVGTVVDEDSLEDNDVV). Residues 371-385 (ASASKTAAGASSYSS) show a composition bias toward low complexity. A compositionally biased stretch (acidic residues) spans 550–561 (VDEDSLEDNDVV).

Belongs to the G-protein coupled receptor 1 family. Opsin subfamily. In terms of tissue distribution, expressed in retina and brain. Expressed in a subset of retinal horizontal cells as well as a small number of amacrine and retinal ganglion cells. Also expressed in a small population of neurons in the suprachiasmatic nucleus (SNC).

Its subcellular location is the cell membrane. In terms of biological role, photoreceptor implicated in non-image-forming responses to light. The sequence is that of Melanopsin-A (opn4a) from Gadus morhua (Atlantic cod).